A 765-amino-acid polypeptide reads, in one-letter code: Transient receptor potential cation channel subfamily V member 6 (765 aa).

The Cytoplasmic portion of the chain corresponds to 1 to 367; that stretch reads MGPLQGDGGP…SLKWKRYGRP (367 aa). ANK repeat units follow at residues 84–114, 118–147, and 156–185; these read IWES…KVHQ, MGET…ELVF, and EGQT…SVSA. The tract at residues 133-143 is interaction with calmodulin; it reads EAAMVLMEAAP. Position 201 is a phosphotyrosine; by SRC (Tyr201). 3 ANK repeats span residues 202–231, 235–277, and 279–308; these read FGEH…DIRA, LGNT…LVPN, and QGLT…HTQW. Residues 368 to 388 form a helical membrane-spanning segment; that stretch reads YFCMLGAIYLLYIICFTMCCI. The Extracellular segment spans residues 389 to 425; it reads YRPLKPRTNNRTSPRDNTLLQQKLLQEAYMTPKDDIR. N-linked (GlcNAc...) asparagine glycosylation is present at Asn398. The helical transmembrane segment at 426-448 threads the bilayer; the sequence is LVGELVTVIGAIIILLVEVPDIF. Residues 449 to 463 lie on the Cytoplasmic side of the membrane; that stretch reads RMGVTRFFGQTILGG. A helical membrane pass occupies residues 464–483; that stretch reads PFHVLIITYAFMVLVTMVMR. Residues 484–489 lie on the Extracellular side of the membrane; it reads LISASG. Residues 490 to 509 traverse the membrane as a helical segment; sequence EVVPMSFALVLGWCNVMYFA. Residues 510–529 lie on the Cytoplasmic side of the membrane; it reads RGFQMLGPFTIMIQKMIFGD. The helical transmembrane segment at 530–552 threads the bilayer; it reads LMRFCWLMAVVILGFASAFYIIF. Over 553–565 the chain is Extracellular; the sequence is QTEDPEELGHFYD. Residues 566–585 constitute an intramembrane region (pore-forming); sequence YPMALFSTFELFLTIIDGPA. A Selectivity filter motif is present at residues 581–585; that stretch reads IDGPA. A Ca(2+)-binding site is contributed by Asp582. Residues 586 to 596 are Extracellular-facing; the sequence is NYNVDLPFMYS. Residues 597–617 traverse the membrane as a helical segment; it reads ITYAAFAIIATLLMLNLLIAM. Residues 618-765 are Cytoplasmic-facing; the sequence is MGDTHWRVAH…EDGESWEYQI (148 aa). Residues 638-642 are interaction with S100A10; the sequence is VATTV. The interaction with calmodulin stretch occupies residues 731 to 751; sequence SSANWERLRQGTLRRDLRGII. Position 742 is a phosphothreonine; by PKC/PRKCA (Thr742).

The protein belongs to the transient receptor (TC 1.A.4) family. TrpV subfamily. TRPV6 sub-subfamily. Homotetramer. Probably also forms heterotetramers with TRPV5. Interacts with TRPV5. Interacts with S100A10 and probably with the ANAX2-S100A10 heterotetramer. The interaction with S100A10 is required for the trafficking to the plasma membrane. Interacts with BSPRY. Interacts with TCAF1 and TCAF2 isoform 2. Interacts with calmodulin. Post-translationally, glycosylated. Phosphorylation at Tyr-201 by SRC leads to an increased calcium influx through the channel. Probably dephosphorylated at this site by PTPN1. Phosphorylation by PRKCA at the calmodulin binding site delays channel inactivation. In terms of tissue distribution, expressed at high levels in the gastrointestinal tract, including esophagus, stomach, duodenum, jejunum, ileum and colon, and in pancreas, placenta, prostate and salivary gland. Expressed at moderate levels in liver, kidney and testis. Expressed in trophoblasts of placenta villus trees (at protein level). Expressed in locally advanced prostate cancer, metastatic and androgen-insensitive prostatic lesions but not detected in healthy prostate tissue and benign prostatic hyperplasia.

It is found in the cell membrane. The enzyme catalyses Ca(2+)(in) = Ca(2+)(out). Functionally, calcium selective cation channel that mediates Ca(2+) uptake in various tissues, including the intestine. Important for normal Ca(2+) ion homeostasis in the body, including bone and skin. The channel is activated by low internal calcium level, probably including intracellular calcium store depletion, and the current exhibits an inward rectification. Inactivation includes both a rapid Ca(2+)-dependent and a slower Ca(2+)-calmodulin-dependent mechanism; the latter may be regulated by phosphorylation. In vitro, is slowly inhibited by Mg(2+) in a voltage-independent manner. Heteromeric assembly with TRPV5 seems to modify channel properties. TRPV5-TRPV6 heteromultimeric concatemers exhibit voltage-dependent gating. This chain is Transient receptor potential cation channel subfamily V member 6 (TRPV6), found in Homo sapiens (Human).